Consider the following 737-residue polypeptide: Polyribonucleotide nucleotidyltransferase (737 aa).

Mg(2+) contacts are provided by Asp-489 and Asp-495. Positions Pro-556–Ile-615 constitute a KH domain. Residues Asp-625–Lys-693 form the S1 motif domain. The tract at residues Ser-691–Glu-737 is disordered. Residues Pro-700–Glu-737 are compositionally biased toward basic and acidic residues.

Belongs to the polyribonucleotide nucleotidyltransferase family. Mg(2+) serves as cofactor.

It is found in the cytoplasm. The catalysed reaction is RNA(n+1) + phosphate = RNA(n) + a ribonucleoside 5'-diphosphate. Functionally, involved in mRNA degradation. Catalyzes the phosphorolysis of single-stranded polyribonucleotides processively in the 3'- to 5'-direction. The sequence is that of Polyribonucleotide nucleotidyltransferase from Streptococcus pneumoniae serotype 4 (strain ATCC BAA-334 / TIGR4).